A 406-amino-acid chain; its full sequence is 2,3-bisphosphoglycerate-independent phosphoglycerate mutase (406 aa).

The tract at residues Val-164 to Asp-184 is disordered.

It belongs to the BPG-independent phosphoglycerate mutase family. A-PGAM subfamily.

It carries out the reaction (2R)-2-phosphoglycerate = (2R)-3-phosphoglycerate. The protein operates within carbohydrate degradation; glycolysis; pyruvate from D-glyceraldehyde 3-phosphate: step 3/5. Catalyzes the interconversion of 2-phosphoglycerate and 3-phosphoglycerate. The chain is 2,3-bisphosphoglycerate-independent phosphoglycerate mutase from Methanocorpusculum labreanum (strain ATCC 43576 / DSM 4855 / Z).